We begin with the raw amino-acid sequence, 237 residues long: 7-cyano-7-deazaguanine synthase (237 aa).

14–24 (FSGGQDSATCL) provides a ligand contact to ATP. 4 residues coordinate Zn(2+): C202, C217, C220, and C223.

It belongs to the QueC family. Requires Zn(2+) as cofactor.

It carries out the reaction 7-carboxy-7-deazaguanine + NH4(+) + ATP = 7-cyano-7-deazaguanine + ADP + phosphate + H2O + H(+). It participates in purine metabolism; 7-cyano-7-deazaguanine biosynthesis. In terms of biological role, catalyzes the ATP-dependent conversion of 7-carboxy-7-deazaguanine (CDG) to 7-cyano-7-deazaguanine (preQ(0)). This chain is 7-cyano-7-deazaguanine synthase, found in Rhodopseudomonas palustris (strain TIE-1).